The primary structure comprises 137 residues: Histone H2B (137 aa).

Residues 1–10 (MPPKAADKKP) show a composition bias toward basic and acidic residues. Residues 1–45 (MPPKAADKKPASKAPATASKAPEKKDAGKKTAASGDKKKRTKTRK) are disordered. 2 positions are modified to N6-acetyllysine; alternate: Lys-8 and Lys-9. Glycyl lysine isopeptide (Lys-Gly) (interchain with G-Cter in SUMO); alternate cross-links involve residues Lys-8 and Lys-9. Ser-12 is subject to Phosphoserine. Lys-13 is modified (N6-acetyllysine). Residue Lys-24 is modified to N6-acetyllysine; alternate. Lys-24 participates in a covalent cross-link: Glycyl lysine isopeptide (Lys-Gly) (interchain with G-Cter in SUMO); alternate. A Glycyl lysine isopeptide (Lys-Gly) (interchain with G-Cter in SUMO) cross-link involves residue Lys-25. A Glycyl lysine isopeptide (Lys-Gly) (interchain with G-Cter in ubiquitin) cross-link involves residue Lys-131.

This sequence belongs to the histone H2B family. In terms of assembly, the nucleosome is a histone octamer containing two molecules each of H2A, H2B, H3 and H4 assembled in one H3-H4 heterotetramer and two H2A-H2B heterodimers. The octamer wraps approximately 147 bp of DNA. Post-translationally, monoubiquitinated by the UBC2-BRE1 complex to form H2BK123ub1. H2BK123ub1 gives a specific tag for epigenetic transcriptional activation and is also prerequisite for H3K4me and H3K79me formation. H2BK123ub1 also modulates the formation of double-strand breaks during meiosis and is a prerequisite for DNA-damage checkpoint activation. Phosphorylated by STE20 to form H2BS10ph during progression through meiotic prophase. May be correlated with chromosome condensation. In terms of processing, acetylated by GCN5 to form H2BK11ac and H2BK16ac. H2BK16ac can also be formed by ESA1. Acetylation of N-terminal lysines and particularly formation of H2BK11acK16ac has a positive effect on transcription. Post-translationally, sumoylation to form H2BK6su or H2BK7su, and probably also H2BK16su or H2BK17su, occurs preferentially near the telomeres and represses gene transcription.

The protein resides in the nucleus. It is found in the chromosome. In terms of biological role, core component of nucleosome. Nucleosomes wrap and compact DNA into chromatin, limiting DNA accessibility to the cellular machineries which require DNA as a template. Histones thereby play a central role in transcription regulation, DNA repair, DNA replication and chromosomal stability. DNA accessibility is regulated via a complex set of post-translational modifications of histones, also called histone code, and nucleosome remodeling. The sequence is that of Histone H2B (HTB1) from Pyricularia oryzae (strain Y34) (Rice blast fungus).